A 1009-amino-acid polypeptide reads, in one-letter code: Type VII secretion system accessory factor EsaA (1009 aa).

Residues Ile-7–Val-27 form a helical membrane-spanning segment. Residues Thr-680–Glu-697 show a composition bias toward basic and acidic residues. Residues Thr-680–Lys-707 form a disordered region. 5 helical membrane passes run Ile-822 to Phe-842, Val-869 to Ile-889, Lys-903 to Leu-923, Ser-928 to Leu-948, and Ile-979 to Phe-999.

It belongs to the EsaA family. In terms of assembly, homodimer. Interacts with EssB.

The protein resides in the cell membrane. In terms of biological role, component of the type VII secretion system (Ess). Provides together with EssB and other components such as EssC and EssE a secretion platform across the cytoplasmic membrane in the host. The polypeptide is Type VII secretion system accessory factor EsaA (Staphylococcus aureus (strain COL)).